We begin with the raw amino-acid sequence, 240 residues long: Ribonuclease 3 (240 aa).

One can recognise an RNase III domain in the interval 9–141; the sequence is VEEFQKETGI…LLAAIYLDQG (133 aa). Residue E54 coordinates Mg(2+). Residue D58 is part of the active site. Residues D127 and E130 each coordinate Mg(2+). Residue E130 is part of the active site. A DRBM domain is found at 168–237; the sequence is DYKTALQEIV…ARIAYEKLLK (70 aa).

The protein belongs to the ribonuclease III family. In terms of assembly, homodimer. Requires Mg(2+) as cofactor.

It is found in the cytoplasm. It carries out the reaction Endonucleolytic cleavage to 5'-phosphomonoester.. Digests double-stranded RNA. Involved in the processing of primary rRNA transcript to yield the immediate precursors to the large and small rRNAs (23S and 16S). Also processes some mRNAs, and tRNAs when they are encoded in the rRNA operon. Probably processes pre-crRNA and tracrRNA of type II CRISPR loci if present in the organism. This Thermotoga maritima (strain ATCC 43589 / DSM 3109 / JCM 10099 / NBRC 100826 / MSB8) protein is Ribonuclease 3 (rnc).